The chain runs to 435 residues: Enolase (435 aa).

(2R)-2-phosphoglycerate is bound at residue glutamine 167. Residue glutamate 209 is the Proton donor of the active site. The Mg(2+) site is built by aspartate 246, glutamate 291, and aspartate 318. Residues lysine 343, arginine 372, serine 373, and lysine 394 each coordinate (2R)-2-phosphoglycerate. Lysine 343 functions as the Proton acceptor in the catalytic mechanism.

The protein belongs to the enolase family. As to quaternary structure, component of the RNA degradosome, a multiprotein complex involved in RNA processing and mRNA degradation. Mg(2+) is required as a cofactor.

The protein localises to the cytoplasm. The protein resides in the secreted. It localises to the cell surface. It catalyses the reaction (2R)-2-phosphoglycerate = phosphoenolpyruvate + H2O. It functions in the pathway carbohydrate degradation; glycolysis; pyruvate from D-glyceraldehyde 3-phosphate: step 4/5. Its function is as follows. Catalyzes the reversible conversion of 2-phosphoglycerate (2-PG) into phosphoenolpyruvate (PEP). It is essential for the degradation of carbohydrates via glycolysis. The sequence is that of Enolase from Psychromonas ingrahamii (strain DSM 17664 / CCUG 51855 / 37).